A 474-amino-acid chain; its full sequence is Aspartyl/glutamyl-tRNA(Asn/Gln) amidotransferase subunit B (474 aa).

This sequence belongs to the GatB/GatE family. GatB subfamily. Heterotrimer of A, B and C subunits.

The catalysed reaction is L-glutamyl-tRNA(Gln) + L-glutamine + ATP + H2O = L-glutaminyl-tRNA(Gln) + L-glutamate + ADP + phosphate + H(+). It carries out the reaction L-aspartyl-tRNA(Asn) + L-glutamine + ATP + H2O = L-asparaginyl-tRNA(Asn) + L-glutamate + ADP + phosphate + 2 H(+). Its function is as follows. Allows the formation of correctly charged Asn-tRNA(Asn) or Gln-tRNA(Gln) through the transamidation of misacylated Asp-tRNA(Asn) or Glu-tRNA(Gln) in organisms which lack either or both of asparaginyl-tRNA or glutaminyl-tRNA synthetases. The reaction takes place in the presence of glutamine and ATP through an activated phospho-Asp-tRNA(Asn) or phospho-Glu-tRNA(Gln). This is Aspartyl/glutamyl-tRNA(Asn/Gln) amidotransferase subunit B from Helicobacter hepaticus (strain ATCC 51449 / 3B1).